The chain runs to 1832 residues: Zinc finger protein 646 (1832 aa).

8 C2H2-type zinc fingers span residues 8–31 (LSCS…ELLH), 48–70 (YRCQ…RRTH), 75–97 (FPCT…MRTH), 239–261 (YKCS…RQSH), 266–288 (YPCA…SRLH), 294–316 (YHCP…QQSH), 374–396 (FRCG…RKSH), and 401–424 (YPCS…RAHH). The tract at residues 26-47 (HRELLHPSPNQDSEEADSIPRP) is disordered. Basic residues predominate over residues 94–108 (MRTHAPEGRRRHRPP). Residues 94 to 200 (MRTHAPEGRR…TNSARAPPLP (107 aa)) form a disordered region. Residues 313–329 (QQSHEGERQEPRWEEKG) show a composition bias toward basic and acidic residues. The segment at 313-346 (QQSHEGERQEPRWEEKGMPTTNGHTDESSQDQLP) is disordered. A Glycyl lysine isopeptide (Lys-Gly) (interchain with G-Cter in SUMO2) cross-link involves residue Lys-451. 2 consecutive C2H2-type zinc fingers follow at residues 465–487 (YKCS…RHSH) and 492–514 (YQCS…VRVH). Glycyl lysine isopeptide (Lys-Gly) (interchain with G-Cter in SUMO2) cross-links involve residues Lys-534 and Lys-557. A C2H2-type 11 zinc finger spans residues 575–597 (HICSICGLLFEDAESLERHGLTH). Position 612 is a phosphoserine (Ser-612). 2 C2H2-type zinc fingers span residues 617–639 (FACR…RQTH) and 644–666 (FSCG…LRRH). The disordered stretch occupies residues 660–810 (KNHLRRHSRR…QPNSSSHSAN (151 aa)). A compositionally biased stretch (basic residues) spans 661–678 (NHLRRHSRRRSRRHRKRA). A Glycyl lysine isopeptide (Lys-Gly) (interchain with G-Cter in SUMO2) cross-link involves residue Lys-688. Over residues 735–767 (EGDKCGLERDETHFQGDKESGGTGEGLERKDAS) the composition is skewed to basic and acidic residues. The span at 798 to 810 (ATGQPNSSSHSAN) shows a compositional bias: polar residues. C2H2-type zinc fingers lie at residues 821 to 843 (HTCS…RPCH), 848 to 870 (YQCS…FQNH), and 881 to 904 (FLCC…RQAH). The interval 901–931 (RQAHSSSGMTEGSEEEGEEEGVAEAAPARSP) is disordered. The segment covering 912-922 (GSEEEGEEEGV) has biased composition (acidic residues). The C2H2-type 17; degenerate zinc finger occupies 958–980 (HICGCCGQTYDDLGSLERHHQSQ). 2 consecutive C2H2-type zinc fingers follow at residues 1052–1074 (FRCN…RKIH) and 1079–1101 (FLCP…LRNH). The disordered stretch occupies residues 1103–1148 (RCKGSEPQVGPIPEAAGSSELQVGPIPEGGSNKPQHMAEEGPGQAE). Glycyl lysine isopeptide (Lys-Gly) (interchain with G-Cter in SUMO2) cross-links involve residues Lys-1157, Lys-1168, and Lys-1178. 6 consecutive C2H2-type zinc fingers follow at residues 1203–1225 (FSCE…RQSH), 1230–1252 (FGCQ…RRIH), 1258–1280 (FRCS…QRVH), 1299–1321 (FRCG…RRSH), 1326–1348 (YSCP…QRLH), and 1364–1386 (VRCA…LREH). Positions 1274–1294 (ASHQRVHMERRGGGGTRKATR) are disordered. Disordered regions lie at residues 1377–1481 (GSLE…WVPQ) and 1509–1529 (TLSH…QPGS). Residues 1378-1393 (SLERHLREHEETEREP) show a composition bias toward basic and acidic residues. Residues 1406–1417 (SEANLTGSQGLE) are compositionally biased toward polar residues. Positions 1427-1438 (PHLEDGVPRPGE) are enriched in basic and acidic residues. Gly residues predominate over residues 1460–1475 (GKAGGWPVGGGLGNHS). C2H2-type zinc fingers lie at residues 1557-1579 (HYCL…SHNH), 1585-1607 (FACP…LQAH), 1677-1699 (FRCT…QKAH), 1704-1726 (YPCS…SRTH), 1732-1754 (HCCS…GRVH), and 1761-1783 (FTCP…QQQH). The tract at residues 1606-1672 (AHARGHSQVP…QAVTSMAAED (67 aa)) is disordered. A disordered region spans residues 1781–1832 (QQHQEEWTVAGSGAPVAPVTGRGDLPLPPPPTPTTPLLDPSPQWPADLSFSL).

The protein belongs to the krueppel C2H2-type zinc-finger protein family.

It is found in the nucleus. In terms of biological role, may be involved in transcriptional regulation. The chain is Zinc finger protein 646 from Homo sapiens (Human).